We begin with the raw amino-acid sequence, 651 residues long: Acetyl-coenzyme A synthetase (651 aa).

CoA contacts are provided by residues 191 to 194 (RGGK), threonine 311, and asparagine 335. Residues 387–389 (GEP), 411–416 (DTWWQT), aspartate 500, and arginine 515 contribute to the ATP site. Serine 523 contributes to the CoA binding site. Arginine 526 contacts ATP. 3 residues coordinate Mg(2+): valine 537, histidine 539, and valine 542. Arginine 584 is a binding site for CoA. Residue lysine 609 is modified to N6-acetyllysine.

The protein belongs to the ATP-dependent AMP-binding enzyme family. The cofactor is Mg(2+). In terms of processing, acetylated. Deacetylation by the SIR2-homolog deacetylase activates the enzyme.

It carries out the reaction acetate + ATP + CoA = acetyl-CoA + AMP + diphosphate. Functionally, catalyzes the conversion of acetate into acetyl-CoA (AcCoA), an essential intermediate at the junction of anabolic and catabolic pathways. AcsA undergoes a two-step reaction. In the first half reaction, AcsA combines acetate with ATP to form acetyl-adenylate (AcAMP) intermediate. In the second half reaction, it can then transfer the acetyl group from AcAMP to the sulfhydryl group of CoA, forming the product AcCoA. The protein is Acetyl-coenzyme A synthetase of Pseudomonas syringae pv. tomato (strain ATCC BAA-871 / DC3000).